A 1043-amino-acid polypeptide reads, in one-letter code: Isoleucine--tRNA ligase (1043 aa).

Positions 49-59 match the 'HIGH' region motif; it reads PFATGLPHYGH. Positions 592 to 596 match the 'KMSKS' region motif; that stretch reads KMSKR. Lys595 lines the ATP pocket.

The protein belongs to the class-I aminoacyl-tRNA synthetase family. IleS type 2 subfamily. Monomer. It depends on Zn(2+) as a cofactor.

The protein localises to the cytoplasm. The enzyme catalyses tRNA(Ile) + L-isoleucine + ATP = L-isoleucyl-tRNA(Ile) + AMP + diphosphate. Functionally, catalyzes the attachment of isoleucine to tRNA(Ile). As IleRS can inadvertently accommodate and process structurally similar amino acids such as valine, to avoid such errors it has two additional distinct tRNA(Ile)-dependent editing activities. One activity is designated as 'pretransfer' editing and involves the hydrolysis of activated Val-AMP. The other activity is designated 'posttransfer' editing and involves deacylation of mischarged Val-tRNA(Ile). This Chlamydia caviae (strain ATCC VR-813 / DSM 19441 / 03DC25 / GPIC) (Chlamydophila caviae) protein is Isoleucine--tRNA ligase.